The sequence spans 293 residues: Formamidopyrimidine-DNA glycosylase (293 aa).

Catalysis depends on Pro2, which acts as the Schiff-base intermediate with DNA. Glu3 acts as the Proton donor in catalysis. Lys58 serves as the catalytic Proton donor; for beta-elimination activity. Residues His104, Arg127, and Arg170 each contribute to the DNA site. Residues 257–293 form an FPG-type zinc finger; the sequence is SVYGREGKPCRNPACGGTVERVVQSGRSTFFCASCQT. The active-site Proton donor; for delta-elimination activity is Arg283.

This sequence belongs to the FPG family. Monomer. The cofactor is Zn(2+).

It carries out the reaction Hydrolysis of DNA containing ring-opened 7-methylguanine residues, releasing 2,6-diamino-4-hydroxy-5-(N-methyl)formamidopyrimidine.. It catalyses the reaction 2'-deoxyribonucleotide-(2'-deoxyribose 5'-phosphate)-2'-deoxyribonucleotide-DNA = a 3'-end 2'-deoxyribonucleotide-(2,3-dehydro-2,3-deoxyribose 5'-phosphate)-DNA + a 5'-end 5'-phospho-2'-deoxyribonucleoside-DNA + H(+). Functionally, involved in base excision repair of DNA damaged by oxidation or by mutagenic agents. Acts as a DNA glycosylase that recognizes and removes damaged bases. Has a preference for oxidized purines, such as 7,8-dihydro-8-oxoguanine (8-oxoG). Has AP (apurinic/apyrimidinic) lyase activity and introduces nicks in the DNA strand. Cleaves the DNA backbone by beta-delta elimination to generate a single-strand break at the site of the removed base with both 3'- and 5'-phosphates. In Brucella melitensis biotype 1 (strain ATCC 23456 / CCUG 17765 / NCTC 10094 / 16M), this protein is Formamidopyrimidine-DNA glycosylase.